A 179-amino-acid chain; its full sequence is Shikimate kinase (179 aa).

11–16 is a binding site for ATP; the sequence is GAGKTT. Threonine 15 lines the Mg(2+) pocket. Positions 33, 57, and 79 each coordinate substrate. Arginine 118 is a binding site for ATP. Arginine 140 lines the substrate pocket.

Belongs to the shikimate kinase family. As to quaternary structure, monomer. Requires Mg(2+) as cofactor.

Its subcellular location is the cytoplasm. The catalysed reaction is shikimate + ATP = 3-phosphoshikimate + ADP + H(+). The protein operates within metabolic intermediate biosynthesis; chorismate biosynthesis; chorismate from D-erythrose 4-phosphate and phosphoenolpyruvate: step 5/7. Functionally, catalyzes the specific phosphorylation of the 3-hydroxyl group of shikimic acid using ATP as a cosubstrate. This is Shikimate kinase from Bacteroides fragilis (strain ATCC 25285 / DSM 2151 / CCUG 4856 / JCM 11019 / LMG 10263 / NCTC 9343 / Onslow / VPI 2553 / EN-2).